Consider the following 519-residue polypeptide: Chaperone SurA (519 aa).

Residues 1 to 31 (MMRSLHSLRRMSGTVLALMLAAGLPLSAAQA) form the signal peptide. Low complexity-rich tracts occupy residues 31-45 (AQPA…QKPA) and 197-207 (PAAAQATRAPA). 2 disordered regions span residues 31–50 (AQPA…PAPS) and 196–221 (NPAA…PAQS). The PpiC 1 domain maps to 223-324 (PAMLVLAQIL…NGFHILKVVD (102 aa)). The segment at 328 to 361 (GGQPAQAARPAPAPAPQQPSSFQEGPSVAAPQGP) is disordered. A PpiC 2 domain is found at 364–463 (VTQTHARHIL…FGWHLIQVLE (100 aa)).

The protein resides in the periplasm. The enzyme catalyses [protein]-peptidylproline (omega=180) = [protein]-peptidylproline (omega=0). Functionally, chaperone involved in the correct folding and assembly of outer membrane proteins. Recognizes specific patterns of aromatic residues and the orientation of their side chains, which are found more frequently in integral outer membrane proteins. May act in both early periplasmic and late outer membrane-associated steps of protein maturation. This is Chaperone SurA from Bordetella bronchiseptica (strain ATCC BAA-588 / NCTC 13252 / RB50) (Alcaligenes bronchisepticus).